Consider the following 514-residue polypeptide: Nucleus accumbens-associated protein 1 (514 aa).

The 65-residue stretch at 30–94 folds into the BTB domain; it reads CDVSVVVKGH…CYTGRLSMNM (65 aa). A Glycyl lysine isopeptide (Lys-Gly) (interchain with G-Cter in SUMO1); alternate cross-link involves residue Lys167. A Glycyl lysine isopeptide (Lys-Gly) (interchain with G-Cter in SUMO2); alternate cross-link involves residue Lys167. Lys182 participates in a covalent cross-link: Glycyl lysine isopeptide (Lys-Gly) (interchain with G-Cter in SUMO2). 2 disordered regions span residues 183–218 and 241–279; these read RLWD…NRMP and GPSM…EEGT. Ser187 bears the Phosphoserine mark. Residues 242–251 show a composition bias toward polar residues; sequence PSMSERTSPG. The residue at position 245 (Ser245) is a Phosphoserine; by PKC. The span at 252 to 264 shows a compositional bias: low complexity; the sequence is TSSAYTSDSPSSY. Acidic residues predominate over residues 267–279; that stretch reads EEDEEEDAGEEGT. Residues Lys304, Lys438, Lys466, and Lys485 each participate in a glycyl lysine isopeptide (Lys-Gly) (interchain with G-Cter in SUMO2) cross-link. The region spanning 360-457 is the BEN domain; the sequence is GTNVYITRAQ…DMCTNARRVV (98 aa). A phosphoserine mark is found at Ser492 and Ser496.

In terms of assembly, homooligomer; mediated by the BTB domain. Both isoforms interact with HDAC3 and HDAC4. Interacts (via BTB domain) with CUL3, PSMD7 and RCOR1. Post-translationally, phosphorylated by protein kinase C (PKC). As to expression, highly expressed in the hippocampus, brain cortex, cerebellum and brainstem. Expressed in the nucleus accumbens, olfactory tubercle, the striatum, frontal and parietal cortex and ventral pallidum. Weakly expressed in the heart, liver, kidney, spleen, testis, and skeletal muscle. Isoform 2 is expressed in the brain and liver, less abundantly expressed in the brain than isoform 1.

It is found in the nucleus. Its subcellular location is the cytoplasm. In terms of biological role, functions as a transcriptional repressor. Isoform 1 is a stronger transcriptional repressor than isoform 2. Seems to function as a transcriptional corepressor in neuronal cells through recruitment of HDAC3 and HDAC4. Contributes to tumor progression, and tumor cell proliferation and survival. This may be mediated at least in part through repressing transcriptional activity of GADD45GIP1. Required for recruiting the proteasome from the nucleus to the cytoplasm and dendritic spines. The protein is Nucleus accumbens-associated protein 1 (Nacc1) of Rattus norvegicus (Rat).